We begin with the raw amino-acid sequence, 376 residues long: Succinyl-diaminopimelate desuccinylase (376 aa).

Histidine 67 lines the Zn(2+) pocket. Residue aspartate 69 is part of the active site. Aspartate 100 is a Zn(2+) binding site. The Proton acceptor role is filled by glutamate 134. 3 residues coordinate Zn(2+): glutamate 135, glutamate 163, and histidine 349.

This sequence belongs to the peptidase M20A family. DapE subfamily. Homodimer. The cofactor is Zn(2+). Co(2+) serves as cofactor.

It catalyses the reaction N-succinyl-(2S,6S)-2,6-diaminopimelate + H2O = (2S,6S)-2,6-diaminopimelate + succinate. Its pathway is amino-acid biosynthesis; L-lysine biosynthesis via DAP pathway; LL-2,6-diaminopimelate from (S)-tetrahydrodipicolinate (succinylase route): step 3/3. Functionally, catalyzes the hydrolysis of N-succinyl-L,L-diaminopimelic acid (SDAP), forming succinate and LL-2,6-diaminopimelate (DAP), an intermediate involved in the bacterial biosynthesis of lysine and meso-diaminopimelic acid, an essential component of bacterial cell walls. This Nitrosomonas europaea (strain ATCC 19718 / CIP 103999 / KCTC 2705 / NBRC 14298) protein is Succinyl-diaminopimelate desuccinylase.